The chain runs to 493 residues: Glycylpeptide N-tetradecanoyltransferase (493 aa).

45–48 serves as a coordination point for tetradecanoyl-CoA; that stretch reads HKFW. Positions 53–73 are disordered; the sequence is VPQITGSGAPAPIEEGPIDDP. Residues 182–184 and 190–194 contribute to the tetradecanoyl-CoA site; these read LCV and SKRLA. The Proton acceptor; via carboxylate role is filled by Leu493.

The protein belongs to the NMT family. Monomer.

The protein resides in the cytoplasm. The enzyme catalyses N-terminal glycyl-[protein] + tetradecanoyl-CoA = N-tetradecanoylglycyl-[protein] + CoA + H(+). Its function is as follows. Adds a myristoyl group to the N-terminal glycine residue of certain cellular proteins. This Cryptococcus neoformans var. neoformans serotype D (strain B-3501A) (Filobasidiella neoformans) protein is Glycylpeptide N-tetradecanoyltransferase.